The chain runs to 546 residues: FAD-dependent monooxygenase (546 aa).

The first 17 residues, 1–17 (MYDVIVVGAGWCGLAAA), serve as a signal peptide directing secretion. Ile106 contributes to the FAD binding site. Residues Asn239 and Asn343 are each glycosylated (N-linked (GlcNAc...) asparagine).

The protein belongs to the FAD-binding monooxygenase family. It depends on FAD as a cofactor.

It functions in the pathway antifungal biosynthesis. In terms of biological role, FAD-dependent monooxygenase; part of the gene cluster that mediates the biosynthesis of the tetrahydropyranyl antifungal agent lanomycin that acts as an inhibitor of CYP51 and blocks the ergosterol biosynthesis. The biosynthesis probably begins with the formation of an hexaketide, followed by methionine mediated alkylation of C-2 and C-6, and methylation of the reduced C-3 oxygen, pyran forming reductive ring closure, oxygenation of C-4, beta-keto reduction, enoyl reduction and dehydration of the remaining oxygens, and finally, acylation with glycine to complete the biosynthesis. This Pyrenophora dematioidea (Helminthosporium dematioideum) protein is FAD-dependent monooxygenase.